The chain runs to 210 residues: Large ribosomal subunit protein uL4 (210 aa).

The segment at 46–96 (QGNASTKTRAEVRGGGRKPWRQKGTGRARAGSNRSPLWRGGGVIFGPKPRD) is disordered. Residues 60-71 (GGRKPWRQKGTG) show a composition bias toward basic residues.

Belongs to the universal ribosomal protein uL4 family. Part of the 50S ribosomal subunit.

Functionally, one of the primary rRNA binding proteins, this protein initially binds near the 5'-end of the 23S rRNA. It is important during the early stages of 50S assembly. It makes multiple contacts with different domains of the 23S rRNA in the assembled 50S subunit and ribosome. Its function is as follows. Forms part of the polypeptide exit tunnel. The chain is Large ribosomal subunit protein uL4 from Gloeothece citriformis (strain PCC 7424) (Cyanothece sp. (strain PCC 7424)).